Here is a 35-residue protein sequence, read N- to C-terminus: Defensin-B (35 aa).

Intrachain disulfides connect Cys4–Cys25, Cys10–Cys33, and Cys14–Cys35.

It is found in the secreted. Its function is as follows. Has antibacterial activity against M.luteus and E.coli. This Mytilus edulis (Blue mussel) protein is Defensin-B.